The primary structure comprises 401 residues: MIRPDLNERILSLRKLRLAQCRTRTRRTIERRNGVRLEINGSWLVEFCSNDYLGLAQHFEIIAALQDAAARDGIGATASHLICGHHAIHKALEYELAEWLGYPRALLFGNGFTANLAVQQALLTKENDICVQDRLNHASLIDATRLAGCRLRRYPHLDVDGAAHQLKNAPEGAAMLATDGIFSMDGDIAPLRALSLVARTQQALMYVDDAHGIGVTGPQGSGCVAAAWLSVEEVPLQLVTLSKALGGYGAALLGSATLIQHLAETARPYIYTTALPPAQAAAALTAIRIARRDEWRRQRLQELVERFRENSRRHGLEIMDSETPIQPLQCGDETTTMAMSAALEREGFLVNAIRPPTVPEGKSRLRVTLSALHTTEQIDTLVQALARSRDALATEAAPVQV.

Residue Arg-24 coordinates substrate. Gly-111 to Phe-112 serves as a coordination point for pyridoxal 5'-phosphate. His-137 contributes to the substrate binding site. Residues Ser-183, His-211, and Thr-240 each coordinate pyridoxal 5'-phosphate. At Lys-243 the chain carries N6-(pyridoxal phosphate)lysine. Thr-357 is a substrate binding site.

It belongs to the class-II pyridoxal-phosphate-dependent aminotransferase family. BioF subfamily. As to quaternary structure, homodimer. Pyridoxal 5'-phosphate serves as cofactor.

The enzyme catalyses 6-carboxyhexanoyl-[ACP] + L-alanine + H(+) = (8S)-8-amino-7-oxononanoate + holo-[ACP] + CO2. Its pathway is cofactor biosynthesis; biotin biosynthesis. Functionally, catalyzes the decarboxylative condensation of pimeloyl-[acyl-carrier protein] and L-alanine to produce 8-amino-7-oxononanoate (AON), [acyl-carrier protein], and carbon dioxide. This is 8-amino-7-oxononanoate synthase from Xylella fastidiosa (strain 9a5c).